An 845-amino-acid chain; its full sequence is Protein translocase subunit SecA 1 (845 aa).

Residues Gln-85, 103–107 (GEGKT), and Asp-492 each bind ATP.

The protein belongs to the SecA family. Monomer and homodimer. Part of the essential Sec protein translocation apparatus which comprises SecA, SecYEG and auxiliary proteins SecDF. Other proteins may also be involved.

The protein localises to the cell membrane. It localises to the cytoplasm. The catalysed reaction is ATP + H2O + cellular proteinSide 1 = ADP + phosphate + cellular proteinSide 2.. Its function is as follows. Part of the Sec protein translocase complex. Interacts with the SecYEG preprotein conducting channel. Has a central role in coupling the hydrolysis of ATP to the transfer of proteins into and across the cell membrane, serving as an ATP-driven molecular motor driving the stepwise translocation of polypeptide chains across the membrane. The chain is Protein translocase subunit SecA 1 from Corynebacterium efficiens (strain DSM 44549 / YS-314 / AJ 12310 / JCM 11189 / NBRC 100395).